Reading from the N-terminus, the 465-residue chain is Alpha-2A adrenergic receptor (465 aa).

Over 1 to 48 (MFRQEQPLAEGSFAPMGSLQPDAGNSSWNGTEAPGGGTRATPYSLQVT) the chain is Extracellular. N-linked (GlcNAc...) asparagine glycans are attached at residues Asn25 and Asn29. Residues 49 to 74 (LTLVCLAGLLMLFTVFGNVLVIIAVF) form a helical membrane-spanning segment. The Cytoplasmic portion of the chain corresponds to 75–85 (TSRALKAPQNL). A helical membrane pass occupies residues 86-111 (FLVSLASADILVATLVIPFSLANEVM). Topologically, residues 112–121 (GYWYFGKVWC) are extracellular. The cysteines at positions 121 and 203 are disulfide-linked. The chain crosses the membrane as a helical span at residues 122–144 (EIYLALDVLFCTSSIVHLCAISL). Residues 145–164 (DRYWSITQAIEYNLKRTPRR) lie on the Cytoplasmic side of the membrane. The helical transmembrane segment at 165–188 (IKAIIVTVWVISAVISFPPLISIE) threads the bilayer. At 189 to 207 (KKGAGGGQQPAEPSCKIND) the chain is on the extracellular side. The helical transmembrane segment at 208 to 232 (QKWYVISSSIGSFFAPCLIMILVYV) threads the bilayer. Over 233–389 (RIYQIAKRRT…RQNREKRFTF (157 aa)) the chain is Cytoplasmic. The segment at 242 to 377 (TRVPPSRRGP…RAGGAKASRW (136 aa)) is disordered. Residues 313-330 (SSEHAERPQGPGKPERGP) are compositionally biased toward basic and acidic residues. Ser346 carries the phosphoserine modification. A compositionally biased stretch (gly residues) spans 353–364 (GAAGPGASGSGQ). Arg368 carries the omega-N-methylarginine modification. Residues 390-414 (VLAVVIGVFVVCWFPFFFTYTLIAV) traverse the membrane as a helical segment. Residues 415–424 (GCPVPYQLFN) are Extracellular-facing. A helical transmembrane segment spans residues 425 to 445 (FFFWFGYCNSSLNPVIYTIFN). Topologically, residues 446–465 (HDFRRAFKKILCRGDRKRIV) are cytoplasmic. Cys457 carries the S-palmitoyl cysteine lipid modification.

It belongs to the G-protein coupled receptor 1 family. Adrenergic receptor subfamily. ADRA2A sub-subfamily. Expressed in brain.

Its subcellular location is the cell membrane. Alpha-2 adrenergic receptors mediate the catecholamine-induced inhibition of adenylate cyclase through the action of G proteins. The protein is Alpha-2A adrenergic receptor of Rattus norvegicus (Rat).